The primary structure comprises 375 residues: Alcohol dehydrogenase 1 (375 aa).

The residue at position 1 (Ala-1) is an N-acetylalanine. Residues Cys-46, His-68, Cys-98, Cys-101, Cys-104, Cys-112, and Cys-175 each contribute to the Zn(2+) site. NAD(+)-binding positions include 200 to 205, Asp-224, Lys-229, 293 to 295, and Arg-370; these read GLGGVG and VGL.

Belongs to the zinc-containing alcohol dehydrogenase family. Class-I subfamily. The cofactor is Zn(2+).

The protein resides in the cytoplasm. It carries out the reaction a primary alcohol + NAD(+) = an aldehyde + NADH + H(+). It catalyses the reaction a secondary alcohol + NAD(+) = a ketone + NADH + H(+). The polypeptide is Alcohol dehydrogenase 1 (Pelophylax perezi (Perez's frog)).